We begin with the raw amino-acid sequence, 339 residues long: Cathepsin B (339 aa).

Residues 1-17 form the signal peptide; that stretch reads MWWSLILLSCLLALTSA. Positions 18 to 79 are cleaved as a propeptide — activation peptide; sequence HDKPSFHPLS…GRVAFGEDID (62 aa). 6 disulfides stabilise this stretch: Cys-93-Cys-122, Cys-105-Cys-150, Cys-141-Cys-207, Cys-142-Cys-146, Cys-179-Cys-211, and Cys-187-Cys-198. Residue Cys-108 is part of the active site. An N-linked (GlcNAc...) asparagine glycan is attached at Asn-192. At Lys-220 the chain carries N6-acetyllysine. Residues His-278 and Asn-298 contribute to the active site. The propeptide occupies 334–339; the sequence is QYWGRF.

Belongs to the peptidase C1 family. As to quaternary structure, dimer of a heavy chain and a light chain cross-linked by a disulfide bond. Interacts with SRPX2. Directly interacts with SHKBP1. In terms of tissue distribution, expressed in thyroid epithelial cells.

Its subcellular location is the lysosome. It localises to the melanosome. It is found in the secreted. The protein resides in the extracellular space. The protein localises to the apical cell membrane. The enzyme catalyses Hydrolysis of proteins with broad specificity for peptide bonds. Preferentially cleaves -Arg-Arg-|-Xaa bonds in small molecule substrates (thus differing from cathepsin L). In addition to being an endopeptidase, shows peptidyl-dipeptidase activity, liberating C-terminal dipeptides.. Its function is as follows. Thiol protease which is believed to participate in intracellular degradation and turnover of proteins. Cleaves matrix extracellular phosphoglycoprotein MEPE. Involved in the solubilization of cross-linked TG/thyroglobulin in the thyroid follicle lumen. Has also been implicated in tumor invasion and metastasis. The polypeptide is Cathepsin B (Ctsb) (Mus musculus (Mouse)).